The primary structure comprises 163 residues: NADH-quinone oxidoreductase subunit I (163 aa).

2 consecutive 4Fe-4S ferredoxin-type domains span residues 54–84 (LRRY…IESE) and 94–123 (TRYD…ETRI). Residues Cys64, Cys67, Cys70, Cys74, Cys103, Cys106, Cys109, and Cys113 each coordinate [4Fe-4S] cluster.

This sequence belongs to the complex I 23 kDa subunit family. NDH-1 is composed of 14 different subunits. Subunits NuoA, H, J, K, L, M, N constitute the membrane sector of the complex. The cofactor is [4Fe-4S] cluster.

Its subcellular location is the cell inner membrane. It catalyses the reaction a quinone + NADH + 5 H(+)(in) = a quinol + NAD(+) + 4 H(+)(out). Its function is as follows. NDH-1 shuttles electrons from NADH, via FMN and iron-sulfur (Fe-S) centers, to quinones in the respiratory chain. The immediate electron acceptor for the enzyme in this species is believed to be ubiquinone. Couples the redox reaction to proton translocation (for every two electrons transferred, four hydrogen ions are translocated across the cytoplasmic membrane), and thus conserves the redox energy in a proton gradient. This Methylobacillus flagellatus (strain ATCC 51484 / DSM 6875 / VKM B-1610 / KT) protein is NADH-quinone oxidoreductase subunit I.